A 183-amino-acid chain; its full sequence is MLTMKDIIRDGHPTLRQKAAELELPLTKEEKETLIAMREFLVNSQDEEIAKRYGLRSGVGLAAPQINISKRMIAVLIPDDGSGKSYDYMLVNPKIVSHSVQEAYLPTGEGCLSVDDNVAGLVHRHNRITIKAKDIEGNDIQLRLKGYPAIVFQHEIDHLNGVMFYDHIDKNHPLQPHTDAVEV.

Fe cation contacts are provided by Cys111 and His154. Residue Glu155 is part of the active site. His158 provides a ligand contact to Fe cation.

Requires Fe(2+) as cofactor.

The enzyme catalyses N-terminal N-formyl-L-methionyl-[peptide] + H2O = N-terminal L-methionyl-[peptide] + formate. Removes the formyl group from the N-terminal Met of newly synthesized proteins. Requires at least a dipeptide for an efficient rate of reaction. N-terminal L-methionine is a prerequisite for activity but the enzyme has broad specificity at other positions. The protein is Peptide deformylase of Staphylococcus aureus.